A 107-amino-acid polypeptide reads, in one-letter code: Flagellar transcriptional regulator FlhD (107 aa).

Belongs to the FlhD family. As to quaternary structure, homodimer; disulfide-linked. Forms a heterohexamer composed of two FlhC and four FlhD subunits. Each FlhC binds a FlhD dimer, forming a heterotrimer, and a hexamer assembles by dimerization of two heterotrimers.

It localises to the cytoplasm. In terms of biological role, functions in complex with FlhC as a master transcriptional regulator that regulates transcription of several flagellar and non-flagellar operons by binding to their promoter region. Activates expression of class 2 flagellar genes, including fliA, which is a flagellum-specific sigma factor that turns on the class 3 genes. Also regulates genes whose products function in a variety of physiological pathways. This Bordetella avium (strain 197N) protein is Flagellar transcriptional regulator FlhD.